A 436-amino-acid chain; its full sequence is Histidine--tRNA ligase 1 (436 aa).

It belongs to the class-II aminoacyl-tRNA synthetase family. As to quaternary structure, homodimer.

The protein resides in the cytoplasm. The enzyme catalyses tRNA(His) + L-histidine + ATP = L-histidyl-tRNA(His) + AMP + diphosphate + H(+). The polypeptide is Histidine--tRNA ligase 1 (Bacillus cereus (strain ATCC 10987 / NRS 248)).